A 31-amino-acid polypeptide reads, in one-letter code: Potassium channel toxin alpha-KTx 5.5 (31 aa).

3 disulfides stabilise this stretch: cysteine 3–cysteine 21, cysteine 8–cysteine 26, and cysteine 12–cysteine 28. Positions 6 to 9 are [R/K]XCQ motif; it reads RRCE. Histidine amide is present on histidine 31.

As to expression, expressed by the venom gland.

It localises to the secreted. Functionally, blocks small conductance calcium-activated potassium channels. The protein is Potassium channel toxin alpha-KTx 5.5 of Hottentotta tamulus (Eastern Indian scorpion).